A 195-amino-acid chain; its full sequence is Small ribosomal subunit protein uS4c (195 aa).

The region spanning 82–143 (MRLDNILFRL…KQRSKALIQN (62 aa)) is the S4 RNA-binding domain.

Belongs to the universal ribosomal protein uS4 family. As to quaternary structure, part of the 30S ribosomal subunit. Contacts protein S5. The interaction surface between S4 and S5 is involved in control of translational fidelity.

It localises to the plastid. It is found in the chloroplast. In terms of biological role, one of the primary rRNA binding proteins, it binds directly to 16S rRNA where it nucleates assembly of the body of the 30S subunit. With S5 and S12 plays an important role in translational accuracy. This chain is Small ribosomal subunit protein uS4c (rps4), found in Pillansia templemannii.